We begin with the raw amino-acid sequence, 1527 residues long: uncharacterized protein (1527 aa).

Coiled-coil stretches lie at residues 262–293, 699–751, 905–932, and 1217–1255; these read NVEI…NINE, QQQQ…SEKL, NNLN…ENQI, and KIIS…QKSS. Positions 683-734 are disordered; sequence TNQEQEQDQQDQPPPPQQQQEQQQEQQQQQEQQQQQDQQQQDQQQDQQEKQQ. Residues 700–728 are compositionally biased toward low complexity; the sequence is QQQEQQQEQQQQQEQQQQQDQQQQDQQQD.

This is an uncharacterized protein from Dictyostelium discoideum (Social amoeba).